The following is a 121-amino-acid chain: Autophagy-related protein 8 (121 aa).

Gly-116 is lipidated: Phosphatidylethanolamine amidated glycine. The propeptide at 117–121 is removed in mature form; it reads DFETA.

The protein belongs to the ATG8 family. Post-translationally, the C-terminal 5 residues are removed to expose Gly-116 at the C-terminus. The C-terminal Gly is then amidated with phosphatidylethanolamine by an activating system similar to that for ubiquitin.

The protein localises to the cytoplasmic vesicle. It localises to the autophagosome membrane. The protein resides in the vacuole membrane. Its function is as follows. Ubiquitin-like modifier involved in autophagosome formation. With cpr-1/atg4, mediates the delivery of the autophagosomes to the vacuole via the microtubule cytoskeleton. Required for selective autophagic degradation of the nucleus (nucleophagy) as well as for mitophagy which contributes to regulate mitochondrial quantity and quality by eliminating the mitochondria to a basal level to fulfill cellular energy requirements and preventing excess ROS production. Also participates in membrane fusion events that take place in the early secretory pathway. Also involved in endoplasmic reticulum-specific autophagic process and is essential for the survival of cells subjected to severe ER stress. The apg-6/atg8-PE conjugate mediates tethering between adjacent membranes and stimulates membrane hemifusion, leading to expansion of the autophagosomal membrane during autophagy. The polypeptide is Autophagy-related protein 8 (apg-6) (Neurospora crassa (strain ATCC 24698 / 74-OR23-1A / CBS 708.71 / DSM 1257 / FGSC 987)).